The chain runs to 426 residues: Spermidine/putrescine import ATP-binding protein PotA (426 aa).

One can recognise an ABC transporter domain in the interval 6 to 238 (IEFKNVSKTY…PINHFVADFI (233 aa)). Position 40-47 (40-47 (GASGSGKS)) interacts with ATP.

This sequence belongs to the ABC transporter superfamily. Spermidine/putrescine importer (TC 3.A.1.11.1) family. The complex is composed of two ATP-binding proteins (PotA), two transmembrane proteins (PotB and PotC) and a solute-binding protein (PotD).

The protein localises to the cell membrane. The catalysed reaction is ATP + H2O + polyamine-[polyamine-binding protein]Side 1 = ADP + phosphate + polyamineSide 2 + [polyamine-binding protein]Side 1.. Functionally, part of the ABC transporter complex PotABCD involved in spermidine/putrescine import. Responsible for energy coupling to the transport system. This chain is Spermidine/putrescine import ATP-binding protein PotA, found in Lactococcus lactis subsp. cremoris (strain SK11).